We begin with the raw amino-acid sequence, 692 residues long: Polyribonucleotide nucleotidyltransferase (692 aa).

Mg(2+) contacts are provided by aspartate 484 and aspartate 490. One can recognise a KH domain in the interval proline 551–threonine 614. Positions glycine 620–lysine 688 constitute an S1 motif domain.

The protein belongs to the polyribonucleotide nucleotidyltransferase family. It depends on Mg(2+) as a cofactor.

The protein localises to the cytoplasm. It catalyses the reaction RNA(n+1) + phosphate = RNA(n) + a ribonucleoside 5'-diphosphate. Functionally, involved in mRNA degradation. Catalyzes the phosphorolysis of single-stranded polyribonucleotides processively in the 3'- to 5'-direction. In Desulfotalea psychrophila (strain LSv54 / DSM 12343), this protein is Polyribonucleotide nucleotidyltransferase.